The sequence spans 484 residues: Glutamate--tRNA ligase (484 aa).

Positions 11–21 (PSPTGYLHIGN) match the 'HIGH' region motif. Residues 252–256 (KLSKR) carry the 'KMSKS' region motif. Lys255 contributes to the ATP binding site.

This sequence belongs to the class-I aminoacyl-tRNA synthetase family. Glutamate--tRNA ligase type 1 subfamily. As to quaternary structure, monomer.

It is found in the cytoplasm. It carries out the reaction tRNA(Glu) + L-glutamate + ATP = L-glutamyl-tRNA(Glu) + AMP + diphosphate. Its function is as follows. Catalyzes the attachment of glutamate to tRNA(Glu) in a two-step reaction: glutamate is first activated by ATP to form Glu-AMP and then transferred to the acceptor end of tRNA(Glu). In Staphylococcus aureus (strain Newman), this protein is Glutamate--tRNA ligase.